The primary structure comprises 118 residues: Large ribosomal subunit protein bL19 (118 aa).

It belongs to the bacterial ribosomal protein bL19 family.

In terms of biological role, this protein is located at the 30S-50S ribosomal subunit interface and may play a role in the structure and function of the aminoacyl-tRNA binding site. The protein is Large ribosomal subunit protein bL19 of Campylobacter curvus (strain 525.92).